The sequence spans 132 residues: Large ribosomal subunit protein bL17 (132 aa).

The protein belongs to the bacterial ribosomal protein bL17 family. As to quaternary structure, part of the 50S ribosomal subunit. Contacts protein L32.

The chain is Large ribosomal subunit protein bL17 from Shewanella sediminis (strain HAW-EB3).